Reading from the N-terminus, the 984-residue chain is Putative formate dehydrogenase SH0748 (984 aa).

The 77-residue stretch at 3–79 folds into the 2Fe-2S ferredoxin-type domain; it reads EHLIVTLDGT…PMTVNTQNND (77 aa). Residues Cys-37, Cys-48, Cys-51, and Cys-63 each contribute to the [2Fe-2S] cluster site. Positions 79–119 constitute a 4Fe-4S His(Cys)3-ligated-type domain; it reads DVKASQKEALDRILEKHMLYCTVCDYNNGDCEIHNAMDAWG. The [4Fe-4S] cluster site is built by His-95, Cys-99, Cys-102, Cys-109, Cys-147, Cys-150, Cys-153, Cys-157, Cys-190, Cys-193, Cys-196, Cys-200, Cys-264, Cys-267, Cys-271, and Cys-299. 2 consecutive 4Fe-4S ferredoxin-type domains span residues 138–165 and 181–211; these read PFYR…VNET and NDVP…VNME. The tract at residues 252 to 984 is formate dehydrogenase; sequence MRKERIKKTK…YVFPGNVVDK (733 aa). Residues 257–313 enclose the 4Fe-4S Mo/W bis-MGD-type domain; that stretch reads IKKTKTVCTYCGVGCSFDVWTKDREVLKVQPSHDSPANKIATCVKGKFSWGHINSDQ.

The protein in the C-terminal section; belongs to the prokaryotic molybdopterin-containing oxidoreductase family. [2Fe-2S] cluster serves as cofactor. It depends on [4Fe-4S] cluster as a cofactor. Mo-bis(molybdopterin guanine dinucleotide) is required as a cofactor.

It catalyses the reaction formate + NAD(+) = CO2 + NADH. In Staphylococcus haemolyticus (strain JCSC1435), this protein is Putative formate dehydrogenase SH0748.